Consider the following 473-residue polypeptide: Inactive FRIGIDA-like protein 2 (473 aa).

Coiled coils occupy residues 3–35 (AAES…RSLL) and 306–361 (SLKV…RATK). The tract at residues 356–384 (RKRATKFNSPANPQQPQEQKVDNKRPRVA) is disordered. Residues 361 to 373 (KFNSPANPQQPQE) are compositionally biased toward polar residues.

This sequence belongs to the Frigida family. As to expression, expressed at low levels throughout the plant, with slightly higher expression in developing seeds and the highest expression in pollen.

In terms of biological role, inactive FRIGIDA-like 2 protein. The sequence is that of Inactive FRIGIDA-like protein 2 (FRL2) from Arabidopsis thaliana (Mouse-ear cress).